A 147-amino-acid polypeptide reads, in one-letter code: uncharacterized protein (147 aa).

This is an uncharacterized protein from Archaeoglobus fulgidus (strain ATCC 49558 / DSM 4304 / JCM 9628 / NBRC 100126 / VC-16).